The chain runs to 750 residues: Ribosomal RNA large subunit methyltransferase K/L (750 aa).

One can recognise a THUMP domain in the interval 46-157 (TAYRLCLWSR…RGEAILSLDL (112 aa)).

It belongs to the methyltransferase superfamily. RlmKL family.

Its subcellular location is the cytoplasm. The catalysed reaction is guanosine(2445) in 23S rRNA + S-adenosyl-L-methionine = N(2)-methylguanosine(2445) in 23S rRNA + S-adenosyl-L-homocysteine + H(+). It carries out the reaction guanosine(2069) in 23S rRNA + S-adenosyl-L-methionine = N(2)-methylguanosine(2069) in 23S rRNA + S-adenosyl-L-homocysteine + H(+). Specifically methylates the guanine in position 2445 (m2G2445) and the guanine in position 2069 (m7G2069) of 23S rRNA. The chain is Ribosomal RNA large subunit methyltransferase K/L from Pseudomonas syringae pv. syringae (strain B728a).